We begin with the raw amino-acid sequence, 645 residues long: Threonine--tRNA ligase (645 aa).

Residues Met1–Thr61 form the TGS domain. The catalytic stretch occupies residues Asp243–Pro534. Zn(2+)-binding residues include Cys334, His385, and His511.

It belongs to the class-II aminoacyl-tRNA synthetase family. As to quaternary structure, homodimer. Requires Zn(2+) as cofactor.

It localises to the cytoplasm. The enzyme catalyses tRNA(Thr) + L-threonine + ATP = L-threonyl-tRNA(Thr) + AMP + diphosphate + H(+). Functionally, catalyzes the attachment of threonine to tRNA(Thr) in a two-step reaction: L-threonine is first activated by ATP to form Thr-AMP and then transferred to the acceptor end of tRNA(Thr). Also edits incorrectly charged L-seryl-tRNA(Thr). The polypeptide is Threonine--tRNA ligase (Marinomonas sp. (strain MWYL1)).